The sequence spans 421 residues: Gamma-glutamyl phosphate reductase (421 aa).

It belongs to the gamma-glutamyl phosphate reductase family.

The protein localises to the cytoplasm. The enzyme catalyses L-glutamate 5-semialdehyde + phosphate + NADP(+) = L-glutamyl 5-phosphate + NADPH + H(+). It participates in amino-acid biosynthesis; L-proline biosynthesis; L-glutamate 5-semialdehyde from L-glutamate: step 2/2. Catalyzes the NADPH-dependent reduction of L-glutamate 5-phosphate into L-glutamate 5-semialdehyde and phosphate. The product spontaneously undergoes cyclization to form 1-pyrroline-5-carboxylate. The protein is Gamma-glutamyl phosphate reductase of Pseudomonas aeruginosa (strain ATCC 15692 / DSM 22644 / CIP 104116 / JCM 14847 / LMG 12228 / 1C / PRS 101 / PAO1).